The following is a 338-amino-acid chain: tRNA N6-adenosine threonylcarbamoyltransferase (338 aa).

The Fe cation site is built by H110 and H114. Substrate is bound by residues 132 to 136, D165, G178, and N274; that span reads ILSGG. D298 lines the Fe cation pocket.

The protein belongs to the KAE1 / TsaD family. Fe(2+) serves as cofactor.

Its subcellular location is the cytoplasm. It carries out the reaction L-threonylcarbamoyladenylate + adenosine(37) in tRNA = N(6)-L-threonylcarbamoyladenosine(37) in tRNA + AMP + H(+). In terms of biological role, required for the formation of a threonylcarbamoyl group on adenosine at position 37 (t(6)A37) in tRNAs that read codons beginning with adenine. Is involved in the transfer of the threonylcarbamoyl moiety of threonylcarbamoyl-AMP (TC-AMP) to the N6 group of A37, together with TsaE and TsaB. TsaD likely plays a direct catalytic role in this reaction. The chain is tRNA N6-adenosine threonylcarbamoyltransferase from Borrelia hermsii (strain HS1 / DAH).